Here is a 248-residue protein sequence, read N- to C-terminus: PF03932 family protein CutC (248 aa).

It belongs to the CutC family. As to quaternary structure, homodimer.

It is found in the cytoplasm. This Escherichia coli O9:H4 (strain HS) protein is PF03932 family protein CutC.